Here is a 234-residue protein sequence, read N- to C-terminus: Opacity protein opA51 (234 aa).

Ala1 is a signal peptide.

The protein belongs to the opacity porin family.

The protein resides in the cell outer membrane. Its function is as follows. Implicated in a number of adherence functions. OPA proteins are implicated in pathogenesis and are subject to phase variation. This is Opacity protein opA51 (opaB) from Neisseria gonorrhoeae.